We begin with the raw amino-acid sequence, 115 residues long: Movement protein TGB2 (115 aa).

Topologically, residues 1-13 (MSAQGHRLTAPVN) are cytoplasmic. Residues 14-34 (SEKVYIVLGLSFALVSITFLL) traverse the membrane as a helical segment. Residues 35 to 74 (SRNSLPHVGDNIHSLPHGGAYRDGTKAILYNSPNLGSRVS) lie on the Lumenal side of the membrane. Residues 75-95 (LHNGKNAAFAAVLLLTLLIYG) traverse the membrane as a helical segment. At 96 to 115 (SKYISQRNHTCACGNNHSSH) the chain is on the cytoplasmic side.

It belongs to the Tymovirales TGBp2 protein family.

The protein localises to the host endoplasmic reticulum membrane. Its function is as follows. Plays a role in viral cell-to-cell propagation, by facilitating genome transport to neighboring plant cells through plasmosdesmata,. The sequence is that of Movement protein TGB2 from Potato virus X (PVX).